The primary structure comprises 264 residues: 3-methyl-2-oxobutanoate hydroxymethyltransferase (264 aa).

Residues Asp45 and Asp84 each contribute to the Mg(2+) site. Residues 45–46 (DS), Asp84, and Lys112 contribute to the 3-methyl-2-oxobutanoate site. Glu114 lines the Mg(2+) pocket. Glu181 (proton acceptor) is an active-site residue.

The protein belongs to the PanB family. In terms of assembly, homodecamer; pentamer of dimers. It depends on Mg(2+) as a cofactor.

The protein localises to the cytoplasm. The enzyme catalyses 3-methyl-2-oxobutanoate + (6R)-5,10-methylene-5,6,7,8-tetrahydrofolate + H2O = 2-dehydropantoate + (6S)-5,6,7,8-tetrahydrofolate. The protein operates within cofactor biosynthesis; (R)-pantothenate biosynthesis; (R)-pantoate from 3-methyl-2-oxobutanoate: step 1/2. Catalyzes the reversible reaction in which hydroxymethyl group from 5,10-methylenetetrahydrofolate is transferred onto alpha-ketoisovalerate to form ketopantoate. The chain is 3-methyl-2-oxobutanoate hydroxymethyltransferase from Escherichia coli (strain K12 / MC4100 / BW2952).